The following is a 596-amino-acid chain: Cytochrome P450 monooxygenase FUM15 (596 aa).

Positions 476–512 (DRWLSPKNGNREATEQSKFKIGNQKRDSTAAPEVTQE) are disordered. The segment covering 484 to 503 (GNREATEQSKFKIGNQKRDS) has biased composition (basic and acidic residues). Cys-536 serves as a coordination point for heme.

The protein belongs to the cytochrome P450 family. Requires heme as cofactor.

It localises to the endoplasmic reticulum. It participates in secondary metabolite biosynthesis. Cytochrome P450 monooxygenase; part of the gene cluster that mediates the biosynthesis of fumonisins B1 (FB1), B2 (FB2), B3 (FB3), and B4 (FB4), which are carcinogenic mycotoxins. Within the pathway, FUM15 may be responsible for the hydroxylations at positions C-14 and/or C-15. Also plays a role in self-protection from FB1 toxicity, probably through derivatization of FB1, and may contribute to ceramide biosynthesis. The biosynthesis starts with the FUM1-catalyzed carbon chain assembly from one molecule of acetyl-CoA, eight molecules of malonyl-CoA, and two molecules of methionine (in S-adenosyl form). The C18 polyketide chain is released from the enzyme by a nucleophilic attack of a carbanion, which is derived from R-carbon of alanine by decarboxylation, on the carbonyl carbon of polyketide acyl chain. This step is catalyzed by the pyridoxal 5'-phosphate-dependent aminoacyl transferase FUM8. The resultant 3-keto intermediate is then stereospecifically reduced to a 3-hydroxyl product by reductase FUM13. Subsequent oxidations at C-10 by the cytochrome P450 monooxygenase FUM2, C-14 and C-15 by FUM6, FUM12 or FUM15, tricarballylic esterification of the hydroxyl groups on C-14 and C-15 by acyltransferase FUM14, and C-5 hydroxylation by 2-keto-glutarate-dependent dioxygenase FUM3 furnish the biosynthesis of fumonisins. The tricarballylic moieties are most likely derived from the citric acid cycle, and their addition to the carbon backbone may involve FUM7, FUM10, FUM11 and FUM14. This Gibberella moniliformis (strain M3125 / FGSC 7600) (Maize ear and stalk rot fungus) protein is Cytochrome P450 monooxygenase FUM15.